We begin with the raw amino-acid sequence, 95 residues long: Aspartyl/glutamyl-tRNA(Asn/Gln) amidotransferase subunit C (95 aa).

This sequence belongs to the GatC family. In terms of assembly, heterotrimer of A, B and C subunits.

The enzyme catalyses L-glutamyl-tRNA(Gln) + L-glutamine + ATP + H2O = L-glutaminyl-tRNA(Gln) + L-glutamate + ADP + phosphate + H(+). It carries out the reaction L-aspartyl-tRNA(Asn) + L-glutamine + ATP + H2O = L-asparaginyl-tRNA(Asn) + L-glutamate + ADP + phosphate + 2 H(+). In terms of biological role, allows the formation of correctly charged Asn-tRNA(Asn) or Gln-tRNA(Gln) through the transamidation of misacylated Asp-tRNA(Asn) or Glu-tRNA(Gln) in organisms which lack either or both of asparaginyl-tRNA or glutaminyl-tRNA synthetases. The reaction takes place in the presence of glutamine and ATP through an activated phospho-Asp-tRNA(Asn) or phospho-Glu-tRNA(Gln). In Chlorobium limicola (strain DSM 245 / NBRC 103803 / 6330), this protein is Aspartyl/glutamyl-tRNA(Asn/Gln) amidotransferase subunit C.